Reading from the N-terminus, the 500-residue chain is NAD(P)H-quinone oxidoreductase chain 4, chloroplastic (500 aa).

Transmembrane regions (helical) follow at residues 4-24, 37-57, 84-104, 111-129, 134-154, 167-187, 208-228, 242-262, 272-292, 305-325, 330-350, 374-396, 411-431, and 462-482; these read FPWL…IFFL, ICIC…HFQL, GLSI…TLAA, SRLF…IGSF, LLLF…LLSM, FILY…GMGL, ALEI…SPII, HYST…YGLV, AHSI…IYAA, IAYS…SITD, GAIL…FLAG, IFTM…GFVA, FFMP…LTPI, and LFVS…PDFV.

It belongs to the complex I subunit 4 family.

The protein resides in the plastid. The protein localises to the chloroplast thylakoid membrane. The catalysed reaction is a plastoquinone + NADH + (n+1) H(+)(in) = a plastoquinol + NAD(+) + n H(+)(out). It carries out the reaction a plastoquinone + NADPH + (n+1) H(+)(in) = a plastoquinol + NADP(+) + n H(+)(out). This Chloranthus spicatus (Chulantree) protein is NAD(P)H-quinone oxidoreductase chain 4, chloroplastic.